A 329-amino-acid chain; its full sequence is Caveolae-associated protein 4a (329 aa).

Disordered regions lie at residues 198–260 (SKEN…NIAK) and 274–329 (KERT…IHED). The stretch at 198-262 (SKENMNKTRE…RLKENIAKKA (65 aa)) forms a coiled coil. Basic and acidic residues predominate over residues 201-220 (NMNKTREKTRENLSKTKESL). Over residues 221–232 (SKTGQTLGTKFN) the composition is skewed to polar residues. Residues 242-260 (EQREKIKQSSERLKENIAK) are compositionally biased toward basic and acidic residues. The segment covering 279–290 (AEGQEGAEAEPA) has biased composition (low complexity). Residue Thr-292 is modified to Phosphothreonine. Positions 310–329 (TENKREGPVSEEGATRIHED) are enriched in basic and acidic residues.

Belongs to the CAVIN family.

It is found in the cytoplasm. Its subcellular location is the myofibril. The protein localises to the sarcomere. The protein resides in the membrane. It localises to the caveola. Induces rhoa activation and activates nppa transcription and myofibrillar organization through the rho/rock signaling pathway. In Danio rerio (Zebrafish), this protein is Caveolae-associated protein 4a (cavin4a).